A 210-amino-acid chain; its full sequence is Probable GTP-binding protein EngB (210 aa).

One can recognise an EngB-type G domain in the interval 25–199 (TGIEVAFAGR…RQKLDSWFNE (175 aa)). GTP-binding positions include 33 to 40 (GRSNAGKS), 60 to 64 (GRTQL), 78 to 81 (DLPG), 145 to 148 (TKAD), and 178 to 180 (FSS). The Mg(2+) site is built by Ser40 and Thr62.

It belongs to the TRAFAC class TrmE-Era-EngA-EngB-Septin-like GTPase superfamily. EngB GTPase family. It depends on Mg(2+) as a cofactor.

In terms of biological role, necessary for normal cell division and for the maintenance of normal septation. This is Probable GTP-binding protein EngB from Klebsiella pneumoniae (strain 342).